Here is a 415-residue protein sequence, read N- to C-terminus: Probable carboxypeptidase ACLA_013260 (415 aa).

The N-terminal stretch at 1–17 (MKFPWLLLVKGAASVAA) is a signal peptide. N97 carries an N-linked (GlcNAc...) asparagine glycan. D145 provides a ligand contact to Zn(2+). Residue E177 is the Proton acceptor of the active site. E178 provides a ligand contact to Zn(2+). N271 is a glycosylation site (N-linked (GlcNAc...) asparagine).

Belongs to the peptidase M20A family. It depends on Zn(2+) as a cofactor.

The protein resides in the secreted. The chain is Probable carboxypeptidase ACLA_013260 from Aspergillus clavatus (strain ATCC 1007 / CBS 513.65 / DSM 816 / NCTC 3887 / NRRL 1 / QM 1276 / 107).